A 95-amino-acid polypeptide reads, in one-letter code: Aspartyl/glutamyl-tRNA(Asn/Gln) amidotransferase subunit C (95 aa).

The tract at residues 51–95 (PTSHATLTSSRLREDVTRPSLPPEKSLANAPAKSDTSFAVPKIIE) is disordered.

It belongs to the GatC family. As to quaternary structure, heterotrimer of A, B and C subunits.

The catalysed reaction is L-glutamyl-tRNA(Gln) + L-glutamine + ATP + H2O = L-glutaminyl-tRNA(Gln) + L-glutamate + ADP + phosphate + H(+). The enzyme catalyses L-aspartyl-tRNA(Asn) + L-glutamine + ATP + H2O = L-asparaginyl-tRNA(Asn) + L-glutamate + ADP + phosphate + 2 H(+). In terms of biological role, allows the formation of correctly charged Asn-tRNA(Asn) or Gln-tRNA(Gln) through the transamidation of misacylated Asp-tRNA(Asn) or Glu-tRNA(Gln) in organisms which lack either or both of asparaginyl-tRNA or glutaminyl-tRNA synthetases. The reaction takes place in the presence of glutamine and ATP through an activated phospho-Asp-tRNA(Asn) or phospho-Glu-tRNA(Gln). The chain is Aspartyl/glutamyl-tRNA(Asn/Gln) amidotransferase subunit C from Myxococcus xanthus (strain DK1622).